A 206-amino-acid polypeptide reads, in one-letter code: Emopamil-binding protein-like (206 aa).

The next 4 membrane-spanning stretches (helical) occupy residues 10-30, 42-62, 101-121, and 165-185; these read EAGG…ALGL, GALI…GPFV, VEIL…YAIV, and CWLY…LLLW. The 146-residue stretch at 39–184 folds into the EXPERA domain; it reads ADRGALIWLC…VWVLIPGLLL (146 aa).

The protein belongs to the EBP family. Homodimer. In terms of tissue distribution, widely expressed with highest levels in liver, lung and kidney.

The protein localises to the endoplasmic reticulum membrane. In terms of biological role, does not possess sterol isomerase activity and does not bind sigma ligands. In Homo sapiens (Human), this protein is Emopamil-binding protein-like (EBPL).